The sequence spans 1470 residues: ABC transporter G family member 48 (1470 aa).

Residues 1–47 form a disordered region; the sequence is MAAAPSASGRRSMSWGSSISQSFRQAEADDPFGRAASQQGHDDDEEN. A compositionally biased stretch (polar residues) spans 9 to 24; that stretch reads GRRSMSWGSSISQSFR. Residues 172-445 enclose the ABC transporter 1 domain; it reads GLIGRFGSSN…FENAGFRCPE (274 aa). Position 205–212 (205–212) interacts with ATP; sequence GPPSSGKS. Residues 523–736 enclose the ABC transmembrane type-2 1 domain; it reads ESLRAVMSRE…SQQAISINEF (214 aa). The next 6 membrane-spanning stretches (helical) occupy residues 541 to 561, 577 to 597, 629 to 649, 660 to 680, 686 to 706, and 772 to 792; these read FIYIFKVTQLIILAFMSMTVF, FLGALTFSLITILFNGFAELQ, VPVSLVEAAVWVVLTYYVMGF, FIAFFVTHQMAMAMFRFLGAI, VANTFGMFVLLIVFIFGGFLI, and FWISIGALIGFLVVFNILYIL. Residues 828–852 are disordered; sequence QIVHNNGASNTSATSSIPMSGSRST. Residues 832–843 show a composition bias toward low complexity; that stretch reads NNGASNTSATSS. In terms of domain architecture, ABC transporter 2 spans 869 to 1121; it reads LCFNHVNYYV…KLVEYFEAVP (253 aa). Residue 914–921 coordinates ATP; sequence GVSGAGKT. One can recognise an ABC transmembrane type-2 2 domain in the interval 1194 to 1408; it reads SQCIANFWKQ…TIYGVVASQF (215 aa). The next 7 membrane-spanning stretches (helical) occupy residues 1215-1234, 1249-1271, 1301-1321, 1331-1351, 1359-1379, 1389-1409, and 1439-1459; these read AMRYLMTLLNGLVFGTVFWQ, LGATYAATFFLGAANCITVQPVV, VIYNILQGILYTIIIYAMIGY, FMFFIVASFNYFTLFGMMLVA, ANILISFVLPLWNLFAGFLVV, WYYWANPVSWTIYGVVASQFG, and FLGYVVLTHFGYIIVFFFIFG.

This sequence belongs to the ABC transporter superfamily. ABCG family. PDR (TC 3.A.1.205) subfamily.

Its subcellular location is the membrane. May be a general defense protein. This is ABC transporter G family member 48 from Oryza sativa subsp. japonica (Rice).